Consider the following 120-residue polypeptide: Late cornified envelope-like proline-rich protein 1 (120 aa).

This sequence belongs to the cornifin (SPRR) family.

The protein is Late cornified envelope-like proline-rich protein 1 (Lelp1) of Mus musculus (Mouse).